The sequence spans 239 residues: Fatty acid metabolism regulator protein (239 aa).

The HTH gntR-type domain occupies 6–74 (QSPAGFAEEY…HGKPTKVNNF (69 aa)). Residues 34–53 (ERELSELIGVTRTTLREVLQ) constitute a DNA-binding region (H-T-H motif).

In terms of assembly, homodimer.

It localises to the cytoplasm. Its function is as follows. Multifunctional regulator of fatty acid metabolism. The polypeptide is Fatty acid metabolism regulator protein (Klebsiella pneumoniae (strain 342)).